The chain runs to 859 residues: DNA mismatch repair protein MutS (859 aa).

Position 617 to 624 (617 to 624) interacts with ATP; the sequence is GPNMGGKS.

Belongs to the DNA mismatch repair MutS family.

This protein is involved in the repair of mismatches in DNA. It is possible that it carries out the mismatch recognition step. This protein has a weak ATPase activity. The chain is DNA mismatch repair protein MutS from Stutzerimonas stutzeri (strain A1501) (Pseudomonas stutzeri).